The following is a 205-amino-acid chain: dITP/XTP pyrophosphatase (205 aa).

7-12 (SNNRGK) provides a ligand contact to substrate. Mg(2+)-binding residues include glutamate 39 and aspartate 68. The active-site Proton acceptor is the aspartate 68. Substrate is bound by residues alanine 69, 154–157 (FGFD), lysine 177, and 182–183 (HR).

The protein belongs to the HAM1 NTPase family. As to quaternary structure, homodimer. Requires Mg(2+) as cofactor.

The enzyme catalyses XTP + H2O = XMP + diphosphate + H(+). It carries out the reaction dITP + H2O = dIMP + diphosphate + H(+). The catalysed reaction is ITP + H2O = IMP + diphosphate + H(+). Its function is as follows. Pyrophosphatase that catalyzes the hydrolysis of nucleoside triphosphates to their monophosphate derivatives, with a high preference for the non-canonical purine nucleotides XTP (xanthosine triphosphate), dITP (deoxyinosine triphosphate) and ITP. Seems to function as a house-cleaning enzyme that removes non-canonical purine nucleotides from the nucleotide pool, thus preventing their incorporation into DNA/RNA and avoiding chromosomal lesions. This chain is dITP/XTP pyrophosphatase, found in Acidovorax ebreus (strain TPSY) (Diaphorobacter sp. (strain TPSY)).